Here is a 784-residue protein sequence, read N- to C-terminus: uncharacterized protein (784 aa).

In terms of domain architecture, 3'-5' exonuclease spans 422–619 (IRIVQNEQDL…EVFQKIVEVV (198 aa)).

This is an uncharacterized protein from Caenorhabditis elegans.